A 124-amino-acid chain; its full sequence is Small ribosomal subunit protein uS12 (124 aa).

At D89 the chain carries 3-methylthioaspartic acid.

The protein belongs to the universal ribosomal protein uS12 family. Part of the 30S ribosomal subunit. Contacts proteins S8 and S17. May interact with IF1 in the 30S initiation complex.

In terms of biological role, with S4 and S5 plays an important role in translational accuracy. Interacts with and stabilizes bases of the 16S rRNA that are involved in tRNA selection in the A site and with the mRNA backbone. Located at the interface of the 30S and 50S subunits, it traverses the body of the 30S subunit contacting proteins on the other side and probably holding the rRNA structure together. The combined cluster of proteins S8, S12 and S17 appears to hold together the shoulder and platform of the 30S subunit. In Psychrobacter arcticus (strain DSM 17307 / VKM B-2377 / 273-4), this protein is Small ribosomal subunit protein uS12.